We begin with the raw amino-acid sequence, 117 residues long: Biogenesis of lysosome-related organelles complex 1 subunit BLS1 (117 aa).

The tract at residues 97 to 117 (EGKAQDTEQAPGKGDRIFRSD) is disordered.

Belongs to the BLOC1S1 family. As to quaternary structure, component of the biogenesis of lysosome-related organelles complex-1 (BLOC-1).

It is found in the endosome. In terms of biological role, component of the biogenesis of lysosome-related organelles complex-1 (BLOC-1), a complex involved in endosomal cargo sorting. The chain is Biogenesis of lysosome-related organelles complex 1 subunit BLS1 (BLS1) from Eremothecium gossypii (strain ATCC 10895 / CBS 109.51 / FGSC 9923 / NRRL Y-1056) (Yeast).